A 183-amino-acid polypeptide reads, in one-letter code: DELTA-miturgitoxin-Cp1a (183 aa).

The first 20 residues, 1 to 20 (MKFSLFFSVFFLAVLHACLS), serve as a signal peptide directing secretion. Residues 21–47 (ESEIDLEDEEHFMSSDSFLSEIQDESR) constitute a propeptide that is removed on maturation. The Processing quadruplet motif motif lies at 44–47 (DESR). Cystine bridges form between Cys51/Cys66, Cys58/Cys75, Cys65/Cys88, Cys77/Cys86, Cys115/Cys130, Cys122/Cys139, Cys129/Cys157, and Cys141/Cys155. 2 Domain repeats span residues 51–77 (CIERNKECTNDRHGCCRGKIFKDKCTC) and 115–141 (CVPKHADCSKRKDDCCKGGIFKYQCKC). Residues 51–141 (CIERNKECTN…GGIFKYQCKC (91 aa)) form a 2 X approximate repeats with cysteine pattern C-C-CC-C-C region. The interval 164-177 (QAIEGALRIAKKLI) is predicted alpha-helix. Trp181 carries the tryptophan amide modification.

It belongs to the neurotoxin 19 (CSTX) family. Double-CSTX subfamily. Post-translationally, cleavage of the propeptide depends on the processing quadruplet motif (XXXR, with at least one of X being E). In terms of tissue distribution, expressed by the venom gland.

Its subcellular location is the secreted. It is found in the target cell membrane. Functionally, spider venom toxin that exhibits cytolytic activity by forming an alpha-helix across the membrane. Lethal to insect larvae. Causes instant paralysis and death in the larvae of the flesh fly (S.carnaria) at doses of 20 ug/g, at doses of less than 10 ug/g causes reversible paralysis. Has cytolytic activity against insect Sf9 cells. Causes stable and irreversible depolarization of fly muscle fibers, leading to contracture at higher toxin concentrations. Destabilizes membranes. The chain is DELTA-miturgitoxin-Cp1a from Cheiracanthium punctorium (Yellow sac spider).